The primary structure comprises 454 residues: Chromosomal replication initiator protein DnaA (454 aa).

The interval 1–74 is domain I, interacts with DnaA modulators; it reads MFDLEKFWDS…IQSAYAYAGI (74 aa). Residues 74 to 116 are domain II; the sequence is IDIYPVFVVKNGPTPSSERMLEPQPQAKPEKARPQGREFTKDL. A disordered region spans residues 88 to 112; the sequence is PSSERMLEPQPQAKPEKARPQGREF. Positions 101 to 112 are enriched in basic and acidic residues; the sequence is KPEKARPQGREF. Positions 117–333 are domain III, AAA+ region; it reads RLNEKYTFEN…GALVKVQAQA (217 aa). The ATP site is built by Gly161, Gly163, Lys164, and Thr165. The segment at 334–454 is domain IV, binds dsDNA; the sequence is TIQKQDINIG…VSDLRQMLER (121 aa).

Belongs to the DnaA family. Oligomerizes as a right-handed, spiral filament on DNA at oriC.

It localises to the cytoplasm. Its function is as follows. Plays an essential role in the initiation and regulation of chromosomal replication. ATP-DnaA binds to the origin of replication (oriC) to initiate formation of the DNA replication initiation complex once per cell cycle. Binds the DnaA box (a 9 base pair repeat at the origin) and separates the double-stranded (ds)DNA. Forms a right-handed helical filament on oriC DNA; dsDNA binds to the exterior of the filament while single-stranded (ss)DNA is stabiized in the filament's interior. The ATP-DnaA-oriC complex binds and stabilizes one strand of the AT-rich DNA unwinding element (DUE), permitting loading of DNA polymerase. After initiation quickly degrades to an ADP-DnaA complex that is not apt for DNA replication. Binds acidic phospholipids. This chain is Chromosomal replication initiator protein DnaA, found in Lactobacillus delbrueckii subsp. bulgaricus (strain ATCC 11842 / DSM 20081 / BCRC 10696 / JCM 1002 / NBRC 13953 / NCIMB 11778 / NCTC 12712 / WDCM 00102 / Lb 14).